Reading from the N-terminus, the 172-residue chain is MNINRDKIVQLVDTDTIENLTSALSQRLIADQLRLTTAESCTGGKLASALCAAEDTPKFYGAGFVTFTDQAKMKILSVSQQSLERYSAVSEKVAAEMATGAIERADADVSIAITGYGGPEGGEDGTPAGTVWFAWHIKGQNYTAVMHFAGDCETVLALAVRFALAQLLQLLL.

This sequence belongs to the CinA family.

In terms of biological role, does not have nicotinamide-nucleotide (NMN) amidohydrolase activity. The chain is Protein YdeJ (ydeJ) from Escherichia coli (strain K12).